Reading from the N-terminus, the 1082-residue chain is MFPAAVGVLWQSGLRDPTPPGGPHGIEGLSLAFEKPSPVTALTQELRFATTMTGGVSLAIWMAGVTREINLLAQASQWRRLGGTFPTNSQLTNESAASLRLYAQLIDLLDMVVDVDILSGTSAGGINAALLASSRVTGSDLGGIRDLWLDLGALTELLRDPRDKKTPSLLYGDERIFAALAKRLPKLATGPFPPTTFPEAARTPSTTLYITTTLLAGETSRFTDSFGTLVQDVDLRGLFTFTETDLARPDTAPALALAARSSASFPLAFEPSFLPFTKGTAKKGEVPARPAMAPFTSLTRPHWVSDGGLLDNRPIGVLFKRIFDRPARRPVRRVLLFVVPSSGPAPDPMHEPPPDNVDEPLGLIDGLLKGLAAVTTQSIAADLRAIRAHQDCMEARTDAKLRLAELAATLRNGTRLLTPSLLTDYRTREATKQAQTLTSALLRRLSTCPPESGPATESLPKSWSAELTVGGDADKVCRQQITATILLSWSQPTAQPLPQSPAELARFGQPAYDLAKGCALTVIRAAFQLARSDADIAALAEVTEAIHRAWRPTASSDLSVLVRTMCSRPAIRQGSLENAADQLAADYLQQSTVPGDAWERLGAALVNAYPTLTQLAASASADSGAPTDSLLARDHVAAGQLETYLSYLGTYPGRADDSRDAPTMAWKLFDLATTQRAMLPADAEIEQGLELVQVSADTRSLLAPDWQTAQQKLTGMRLHHFGAFYKRSWRANDWMWGRLDGAGWLVHVLLDPRRVRWIVGERADTNGPQSGAQWFLGKLKELGAPDFPSPGYPLPAVGGGPAQHLTEDMLLDELGFLDDPAKPLPASIPWTALWLSQAWQQRVLEEELDGLANTVLDPQPGKLPDWSPTSSRTWATKVLAAHPGDAKYALLNENPIAGETFASDKGSPLMAHTVAKAAATAAGAAGSVRQLPSVLKPPLITLRTLTLSGYRVVSLTKGIARSTIIAGALLLVLGVAAAIQSVTVFGVTGLIAAGTGGLLVVLGTWQVSGRLLFALLSFSVVGAVLALATPVVREWLFGTQQQPGWVGTHAYWLGAQWWHPLVVVGLIALVAIMIAAATPGRR.

One can recognise a PNPLA domain in the interval 50-319 (TTMTGGVSLA…LDNRPIGVLF (270 aa)). The short motif at 120–124 (GTSAG) is the GXSXG element. Serine 122 acts as the Nucleophile in catalysis. Aspartate 306 serves as the catalytic Proton acceptor. Residues 306 to 308 (DGG) carry the DGA/G motif. Helical transmembrane passes span 959 to 979 (IARSTIIAGALLLVLGVAAAI), 982 to 1002 (VTVFGVTGLIAAGTGGLLVVL), 1012 to 1032 (LFALLSFSVVGAVLALATPVV), and 1057 to 1077 (WWHPLVVVGLIALVAIMIAAA).

Its subcellular location is the cell membrane. This is an uncharacterized protein from Mycobacterium tuberculosis (strain ATCC 25618 / H37Rv).